Reading from the N-terminus, the 305-residue chain is Olfactory receptor 4F5 (305 aa).

The Extracellular segment spans residues Met-1–Thr-18. A helical membrane pass occupies residues Phe-19–Val-42. Residues Val-43–Ser-50 are Cytoplasmic-facing. Residues Pro-51–Pro-72 form a helical membrane-spanning segment. The Extracellular portion of the chain corresponds to Lys-73–Gln-93. Cys-90 and Cys-182 are oxidised to a cystine. A helical membrane pass occupies residues Ile-94–Phe-113. Topologically, residues Asp-114–Asn-132 are cytoplasmic. The helical transmembrane segment at Ala-133–Ser-151 threads the bilayer. Topologically, residues Gln-152–Leu-188 are extracellular. The chain crosses the membrane as a helical span at residues Asp-189–Thr-212. Over Ile-213–Lys-228 the chain is Cytoplasmic. A helical membrane pass occupies residues Ala-229 to Tyr-251. Topologically, residues Ala-252 to Lys-262 are extracellular. Residues Phe-263 to Leu-282 form a helical membrane-spanning segment. The Cytoplasmic segment spans residues Arg-283–Phe-305.

This sequence belongs to the G-protein coupled receptor 1 family.

The protein localises to the cell membrane. In terms of biological role, odorant receptor. This Homo sapiens (Human) protein is Olfactory receptor 4F5 (OR4F5).